A 437-amino-acid polypeptide reads, in one-letter code: Acyl-coenzyme A thioesterase 2, chloroplastic (437 aa).

A chloroplast-targeting transit peptide spans 1-13 (MDLSSSPNHPITV). 2 consecutive HotDog ACOT-type domains span residues 89 to 211 (ILYN…RDSK) and 287 to 404 (RDTR…RPEA).

Belongs to the acyl coenzyme A hydrolase family. As to expression, mostly expressed at low levels in glandular trichomes (lupulin glands), and, to a lower extent, in stems, leaves, flowers and cones.

The protein localises to the plastid. The protein resides in the chloroplast. Acyl-CoA thioesterases are a group of enzymes that catalyze the hydrolysis of acyl-CoAs to the free fatty acid and coenzyme A (CoASH), providing the potential to regulate intracellular levels of acyl-CoAs, free fatty acids and CoASH. This Humulus lupulus (European hop) protein is Acyl-coenzyme A thioesterase 2, chloroplastic.